A 314-amino-acid polypeptide reads, in one-letter code: Porphobilinogen deaminase (314 aa).

Cys249 carries the S-(dipyrrolylmethanemethyl)cysteine modification.

The protein belongs to the HMBS family. As to quaternary structure, monomer. Dipyrromethane is required as a cofactor.

The enzyme catalyses 4 porphobilinogen + H2O = hydroxymethylbilane + 4 NH4(+). It functions in the pathway porphyrin-containing compound metabolism; protoporphyrin-IX biosynthesis; coproporphyrinogen-III from 5-aminolevulinate: step 2/4. Functionally, tetrapolymerization of the monopyrrole PBG into the hydroxymethylbilane pre-uroporphyrinogen in several discrete steps. The sequence is that of Porphobilinogen deaminase from Brucella suis biovar 1 (strain 1330).